The sequence spans 82 residues: Large ribosomal subunit protein eL14 (82 aa).

The protein belongs to the eukaryotic ribosomal protein eL14 family.

In Pyrococcus abyssi (strain GE5 / Orsay), this protein is Large ribosomal subunit protein eL14.